Consider the following 256-residue polypeptide: uncharacterized protein (256 aa).

An ATP-binding site is contributed by 29 to 36; it reads GDDHSGKT.

This is an uncharacterized protein from Saccharomyces cerevisiae (strain ATCC 204508 / S288c) (Baker's yeast).